Consider the following 20-residue polypeptide: Unknown protein NF040 from 2D-PAGE (20 aa).

Residues 1-20 (MKVYTDIFTRDEFLSDSYPM) enclose the TCTP domain.

The protein belongs to the TCTP family.

The chain is Unknown protein NF040 from 2D-PAGE from Naegleria fowleri (Brain eating amoeba).